A 259-amino-acid chain; its full sequence is uncharacterized protein (259 aa).

Residues L4 to G248 form the ABC transporter domain. G42 to T49 serves as a coordination point for ATP.

This sequence belongs to the ABC transporter superfamily.

This is an uncharacterized protein from Bacillus subtilis (strain 168).